The chain runs to 614 residues: Probable LRR receptor-like serine/threonine-protein kinase At5g63710 (614 aa).

Positions 1 to 50 (MAHSGNGESFHDPLRGFIQRNCFRWNNQKLILQCFMALAFVGITSSTTQP) are cleaved as a signal peptide. Residues 51–224 (DIEGGALLQL…VTSSKKKLRD (174 aa)) are Extracellular-facing. N-linked (GlcNAc...) asparagine glycans are attached at residues N65, N125, N146, and N175. LRR repeat units lie at residues 115–139 (LKFL…LGNM), 141–163 (NLQT…WSQL), and 164–187 (SNLK…FFSI). Residues 225–245 (ITLTASCVASIILFLGAMVMY) traverse the membrane as a helical segment. The Cytoplasmic segment spans residues 246–613 (HHHRVRRTKY…DQESIRLSTA (368 aa)). At T286 the chain carries Phosphothreonine. The region spanning 289-573 (FNESNLIGQG…GTGGLAEKWT (285 aa)) is the Protein kinase domain. Position 295–303 (295–303 (IGQGGFGKV)) interacts with ATP. T312 carries the phosphothreonine modification. Position 317 (K317) interacts with ATP. The residue at position 370 (S370) is a Phosphoserine. T389 bears the Phosphothreonine mark. D416 functions as the Proton acceptor in the catalytic mechanism. Phosphothreonine occurs at positions 449, 450, and 455. A Phosphotyrosine modification is found at Y463. T466 is subject to Phosphothreonine. Residue S470 is modified to Phosphoserine. At T545 the chain carries Phosphothreonine.

This sequence belongs to the protein kinase superfamily. Ser/Thr protein kinase family.

The protein localises to the cell membrane. It carries out the reaction L-seryl-[protein] + ATP = O-phospho-L-seryl-[protein] + ADP + H(+). It catalyses the reaction L-threonyl-[protein] + ATP = O-phospho-L-threonyl-[protein] + ADP + H(+). The polypeptide is Probable LRR receptor-like serine/threonine-protein kinase At5g63710 (Arabidopsis thaliana (Mouse-ear cress)).